The primary structure comprises 567 residues: MHGRLKVKTSEEQAEAKRLEREQKLKLYQSATQAVFQKREAGELDESVLELTSQILGANPDFATLWNCRREVLQQLETQKSPEELAALVKAELGFLESCLRVNPKSYGTWHHRCWLLSRLPEPNWARELELCARFLEADERNFHCWDYRRFVAAQAAVAPAEELAFTDSLITRNFSNYSSWHYRSCLLPQLHPQPDSGPQGRLPENVLLRELELVQNAFFTDPNDQSAWFYHRWLLGRAEPHDVLCCLHVSREEACLSVCFSRPLIVGSKMGTLLLTVDEAPLSVEWRTPDGRNRPSHVWLCDLPAASLNDHLPQHTFRVIWTGSDTQKECVLLKGHQECWCRDSATDEQLFRCELSVEKSTVLQSELESCKELQELEPENKWCLLTIILLMRALDPLLYEKETLEYFSTLKAVDPMRAAYLDDLRSKFLVENSVLKMEYADVRVLHLAHKDLTVLCHLEQLLLVTHLDLSHNRLRALPPALAALRCLEVLQASDNVLENLDGVANLPRLRELLLCNNRLQQSAALQTLASCPRLVFLNLQGNSLCQEEGIRERLAEMLPSVSSILT.

6 PFTA repeats span residues 44–78 (LDES…QLET), 88–122 (LVKA…RLPE), 124–158 (NWAR…QAAV), 159–193 (APAE…QLHP), 207–241 (VLLR…RAEP), and 363–397 (VLQS…ALDP). Ser-98 is subject to Phosphoserine. LRR repeat units lie at residues 442-463 (DVRV…EQLL), 464-486 (LVTH…AALR), 487-508 (CLEV…ANLP), 509-530 (RLRE…QTLA), and 534-555 (RLVF…RERL).

The protein belongs to the protein prenyltransferase subunit alpha family. In terms of assembly, heterotrimer composed of RABGGTA, RABGGTB and CHM; within this trimer, RABGGTA and RABGGTB form the catalytic component B, while CHM (component A) mediates peptide substrate binding. The Rab GGTase dimer (RGGT) interacts with CHM (component A) prior to Rab protein binding; the association is stabilized by geranylgeranyl pyrophosphate (GGpp). The CHM:RGGT:Rab complex is destabilized by GGpp. Interacts with non-phosphorylated form of RAB8A; phosphorylation of RAB8A at 'Thr-72' disrupts this interaction.

It carries out the reaction geranylgeranyl diphosphate + L-cysteinyl-[protein] = S-geranylgeranyl-L-cysteinyl-[protein] + diphosphate. Its activity is regulated as follows. The enzymatic reaction requires the aid of a Rab escort protein (also called component A), such as CHM. In terms of biological role, catalyzes the transfer of a geranylgeranyl moiety from geranylgeranyl diphosphate to both cysteines of Rab proteins with the C-terminal sequence -XXCC, -XCXC and -CCXX, such as RAB1A, RAB3A, RAB5A and RAB7A. This Mus musculus (Mouse) protein is Geranylgeranyl transferase type-2 subunit alpha (Rabggta).